A 103-amino-acid polypeptide reads, in one-letter code: Large ribosomal subunit protein bL21 (103 aa).

It belongs to the bacterial ribosomal protein bL21 family. Part of the 50S ribosomal subunit. Contacts protein L20.

Functionally, this protein binds to 23S rRNA in the presence of protein L20. This chain is Large ribosomal subunit protein bL21, found in Bordetella parapertussis (strain 12822 / ATCC BAA-587 / NCTC 13253).